The primary structure comprises 574 residues: Glycine--tRNA ligase (574 aa).

Residues Arg-96 and Glu-162 each contribute to the substrate site. Residues 194–196, 204–209, 327–328, and 450–453 each bind ATP; these read RNE, IRLREF, EC, and GIDR. 209–213 contributes to the substrate binding site; that stretch reads FTQAE. Substrate is bound at residue 446–450; sequence EPSYG.

The protein belongs to the class-II aminoacyl-tRNA synthetase family.

Its subcellular location is the cytoplasm. The enzyme catalyses tRNA(Gly) + glycine + ATP = glycyl-tRNA(Gly) + AMP + diphosphate. Catalyzes the attachment of glycine to tRNA(Gly). The sequence is that of Glycine--tRNA ligase from Methanococcus maripaludis (strain C7 / ATCC BAA-1331).